Consider the following 347-residue polypeptide: GMP reductase (347 aa).

Residue A108–A131 coordinates NADP(+). Residues G181 and G183 each coordinate K(+). C186 (thioimidate intermediate) is an active-site residue. I216–V239 contacts NADP(+).

This sequence belongs to the IMPDH/GMPR family. GuaC type 1 subfamily. Homotetramer.

It carries out the reaction IMP + NH4(+) + NADP(+) = GMP + NADPH + 2 H(+). In terms of biological role, catalyzes the irreversible NADPH-dependent deamination of GMP to IMP. It functions in the conversion of nucleobase, nucleoside and nucleotide derivatives of G to A nucleotides, and in maintaining the intracellular balance of A and G nucleotides. This chain is GMP reductase, found in Shigella flexneri.